The primary structure comprises 701 residues: Methionine--tRNA ligase (701 aa).

Residues 13-23 carry the 'HIGH' region motif; it reads PYANGSIHLGH. 4 residues coordinate Zn(2+): Cys-144, Cys-147, Cys-157, and Cys-160. A 'KMSKS' region motif is present at residues 336-340; it reads KMSKS. Lys-339 serves as a coordination point for ATP. A tRNA-binding domain is found at 600–701; sequence DFSKIDLRIA…SGAQPGMRVK (102 aa).

This sequence belongs to the class-I aminoacyl-tRNA synthetase family. MetG type 1 subfamily. As to quaternary structure, homodimer. Zn(2+) serves as cofactor.

The protein resides in the cytoplasm. It carries out the reaction tRNA(Met) + L-methionine + ATP = L-methionyl-tRNA(Met) + AMP + diphosphate. In terms of biological role, is required not only for elongation of protein synthesis but also for the initiation of all mRNA translation through initiator tRNA(fMet) aminoacylation. In Nitrosomonas eutropha (strain DSM 101675 / C91 / Nm57), this protein is Methionine--tRNA ligase.